We begin with the raw amino-acid sequence, 132 residues long: Small ribosomal subunit protein uS8 (132 aa).

This sequence belongs to the universal ribosomal protein uS8 family. In terms of assembly, part of the 30S ribosomal subunit. Contacts proteins S5 and S12.

One of the primary rRNA binding proteins, it binds directly to 16S rRNA central domain where it helps coordinate assembly of the platform of the 30S subunit. This chain is Small ribosomal subunit protein uS8, found in Bifidobacterium longum (strain NCC 2705).